An 860-amino-acid polypeptide reads, in one-letter code: MYILVWKRGQQIKTFHTLDEAANFKAASNIDEAQMFSITVAPAISASGGSNEATNLRRLMYLSKSTNPEECNPQFLAEMARVATLRNREIGVSGFLMYSSPFFFQVIEGTDEDLDFLFAKISADPRHERCIVLANGPCTGRMYGDWHMKDSHIDSITTHPAMKTILYQIARSFSSMWSYLPKSAGNMLLLGKDPAAQPPEPMSVVVTFIYLVEFGSILSNPNLTEQAAEVLSTFVDVCVKNVEGSGGNIAKFITGICMAYWPINRTEDALNAIQQISEDLAQLRSQQAPGSAISLMYSQAGVHYGRAMLCNAGSRKSDFTLLGDCINTTSRIATLAKKLKTPLLFSFEVRCLLGDEMREEVEGAGMHQVKGRDKPVVVYQFPGPELDVEMVRQKIEHFTPGRFRCQMPVVEYESLPISQRPPIFDDTPKGKPRPRTPGYGGRQRSDSLVDRLIMIAKLAGPSISATGDSTLTTLTYISQATRPMSRLDLSAIMRTATRRNAQLSITGTLLYVNGLFVQTLEGPKDAMVNLYLKIRQDPRHTDVVTVHMAPIQERAYPAEWTLTSATEEMLATFPPLQDVLSQLAKSFTSLETYVPSTVVRYLTAGNNPRNLMPVSCGVVMLATDICSFTSLTEKSSLTEVWMICNTFIDACTSAICQEGGEVIKLIGDCVTAYFPGNGADSAVAAAQELFTFCRQLREAFVDVLDVRGCVSCGVGLDYGQVVMAQCGSLGLTEYVVAGAVSARVMEVESITREVGYAIVITEPVADRLSPQLRDHGIIPTPQAIEGLPCYGIAGEEFELDVDSIKRGIKALHAARSGEKPLALEPEEAKQDYRVSPGRMRHGDSGRRSNSAQGKRSTQVR.

The 94-residue stretch at 56–149 folds into the BLUF 1 domain; that stretch reads LRRLMYLSKS…GRMYGDWHMK (94 aa). The Guanylate cyclase 1 domain maps to 205–333; sequence VVTFIYLVEF…DCINTTSRIA (129 aa). The segment at 420–443 is disordered; sequence RPPIFDDTPKGKPRPRTPGYGGRQ. The region spanning 471-563 is the BLUF 2 domain; sequence LTTLTYISQA…RAYPAEWTLT (93 aa). A Guanylate cyclase 2 domain is found at 619 to 748; sequence VMLATDICSF…AVSARVMEVE (130 aa). The tract at residues 819-860 is disordered; that stretch reads KPLALEPEEAKQDYRVSPGRMRHGDSGRRSNSAQGKRSTQVR. The span at 847–860 shows a compositional bias: polar residues; sequence RSNSAQGKRSTQVR.

This sequence belongs to the adenylyl cyclase class-4/guanylyl cyclase family. Heterotetramer of two alpha and two beta subunits. FAD serves as cofactor.

The protein resides in the cell projection. It is found in the cilium. It localises to the flagellum. The catalysed reaction is ATP = 3',5'-cyclic AMP + diphosphate. Functionally, acts as a photoreceptor for the step-up photophobic response. The protein is Photoactivated adenylate cyclase subunit beta of Euglena longa (Euglenophycean alga).